A 180-amino-acid chain; its full sequence is Large ribosomal subunit protein eL18 (180 aa).

The interval 152 to 180 is disordered; the sequence is FGPAPGVPGSHTKPYVISKSRERTNAHRA. The span at 170–180 shows a compositional bias: basic and acidic residues; it reads KSRERTNAHRA.

This sequence belongs to the eukaryotic ribosomal protein eL18 family.

It is found in the cytoplasm. The chain is Large ribosomal subunit protein eL18 (RPL18) from Taenia asiatica (Asian tapeworm).